A 337-amino-acid chain; its full sequence is Probable dual-specificity RNA methyltransferase RlmN (337 aa).

The Proton acceptor role is filled by glutamate 88. In terms of domain architecture, Radical SAM core spans 94-322; the sequence is SSDRLTVCVS…ASIRRSRGLD (229 aa). Cysteine 101 and cysteine 327 form a disulfide bridge. The [4Fe-4S] cluster site is built by cysteine 108, cysteine 112, and cysteine 115. S-adenosyl-L-methionine is bound by residues 155–156, serine 185, 208–210, and asparagine 284; these read GE and SLH. The active-site S-methylcysteine intermediate is the cysteine 327.

This sequence belongs to the radical SAM superfamily. RlmN family. It depends on [4Fe-4S] cluster as a cofactor.

The protein localises to the cytoplasm. It catalyses the reaction adenosine(2503) in 23S rRNA + 2 reduced [2Fe-2S]-[ferredoxin] + 2 S-adenosyl-L-methionine = 2-methyladenosine(2503) in 23S rRNA + 5'-deoxyadenosine + L-methionine + 2 oxidized [2Fe-2S]-[ferredoxin] + S-adenosyl-L-homocysteine. It carries out the reaction adenosine(37) in tRNA + 2 reduced [2Fe-2S]-[ferredoxin] + 2 S-adenosyl-L-methionine = 2-methyladenosine(37) in tRNA + 5'-deoxyadenosine + L-methionine + 2 oxidized [2Fe-2S]-[ferredoxin] + S-adenosyl-L-homocysteine. Functionally, specifically methylates position 2 of adenine 2503 in 23S rRNA and position 2 of adenine 37 in tRNAs. The chain is Probable dual-specificity RNA methyltransferase RlmN from Thermosynechococcus vestitus (strain NIES-2133 / IAM M-273 / BP-1).